A 317-amino-acid polypeptide reads, in one-letter code: NAD kinase (317 aa).

D82 acts as the Proton acceptor in catalysis. NAD(+) contacts are provided by residues D82 to G83, R87, N157 to E158, D187, and T198 to S203.

This sequence belongs to the NAD kinase family. Requires a divalent metal cation as cofactor.

Its subcellular location is the cytoplasm. The catalysed reaction is NAD(+) + ATP = ADP + NADP(+) + H(+). Its function is as follows. Involved in the regulation of the intracellular balance of NAD and NADP, and is a key enzyme in the biosynthesis of NADP. Catalyzes specifically the phosphorylation on 2'-hydroxyl of the adenosine moiety of NAD to yield NADP. This Corynebacterium diphtheriae (strain ATCC 700971 / NCTC 13129 / Biotype gravis) protein is NAD kinase.